The following is a 350-amino-acid chain: Fe(3+) ions import ATP-binding protein FbpC (350 aa).

Residues 4 to 236 form the ABC transporter domain; sequence LDIINLSKSF…PNDEQTAHFL (233 aa). 36–43 provides a ligand contact to ATP; that stretch reads GPSGSGKT.

This sequence belongs to the ABC transporter superfamily. Fe(3+) ion importer (TC 3.A.1.10) family. The complex is composed of two ATP-binding proteins (FbpC), two transmembrane proteins (FbpB) and a solute-binding protein (FbpA).

Its subcellular location is the cell inner membrane. The enzyme catalyses Fe(3+)(out) + ATP + H2O = Fe(3+)(in) + ADP + phosphate + H(+). In terms of biological role, part of the ABC transporter complex FbpABC involved in Fe(3+) ions import. Responsible for energy coupling to the transport system. This is Fe(3+) ions import ATP-binding protein FbpC from Pseudomonas fluorescens (strain Pf0-1).